The primary structure comprises 445 residues: UDP-N-acetylmuramoylalanine--D-glutamate ligase (445 aa).

117 to 123 serves as a coordination point for ATP; the sequence is GSNGKTT.

Belongs to the MurCDEF family.

It localises to the cytoplasm. It catalyses the reaction UDP-N-acetyl-alpha-D-muramoyl-L-alanine + D-glutamate + ATP = UDP-N-acetyl-alpha-D-muramoyl-L-alanyl-D-glutamate + ADP + phosphate + H(+). Its pathway is cell wall biogenesis; peptidoglycan biosynthesis. In terms of biological role, cell wall formation. Catalyzes the addition of glutamate to the nucleotide precursor UDP-N-acetylmuramoyl-L-alanine (UMA). This chain is UDP-N-acetylmuramoylalanine--D-glutamate ligase, found in Neisseria meningitidis serogroup A / serotype 4A (strain DSM 15465 / Z2491).